A 320-amino-acid polypeptide reads, in one-letter code: Cytochrome f (320 aa).

The first 35 residues, 1 to 35, serve as a signal peptide directing secretion; sequence MQTRNAFSWLKKQITRSISVSLMIYILTRTSISSA. Heme-binding residues include Tyr-36, Cys-56, Cys-59, and His-60. The chain crosses the membrane as a helical span at residues 286–306; sequence AQGLLFFLASVILAQIFLVLK.

The protein belongs to the cytochrome f family. In terms of assembly, the 4 large subunits of the cytochrome b6-f complex are cytochrome b6, subunit IV (17 kDa polypeptide, petD), cytochrome f and the Rieske protein, while the 4 small subunits are PetG, PetL, PetM and PetN. The complex functions as a dimer. Heme is required as a cofactor.

It is found in the plastid. It localises to the chloroplast thylakoid membrane. In terms of biological role, component of the cytochrome b6-f complex, which mediates electron transfer between photosystem II (PSII) and photosystem I (PSI), cyclic electron flow around PSI, and state transitions. This chain is Cytochrome f, found in Nicotiana tomentosiformis (Tobacco).